The sequence spans 78 residues: Large ribosomal subunit protein bL28 (78 aa).

Belongs to the bacterial ribosomal protein bL28 family.

This Tropheryma whipplei (strain TW08/27) (Whipple's bacillus) protein is Large ribosomal subunit protein bL28.